A 461-amino-acid polypeptide reads, in one-letter code: MEDELYLENIDEFVTDQNRIVTYKWLSYTLGVHVNQAKQMLYDYVERKRKENSGAQLHVTYLVAGNLIQNGHTCHKVAVVREDKLEAMKSKLATVTSVHVYSIQKALLKDSGPLYNTDYDIIKANLHNCSKFSAIRCADAVPRTPAEVAQARTLARSSSQTPSDTSAVSTPPLNGHGPTAAKQSSQPPKGIMGMFAAKAASKAQDANKEPKAKEAPSVSAASSKPSAKGNIMNNFFGKAAMNKLKVNSVPGQPKEEKEAVKTSVPATEPESSPNTIVEKPGRKTEPAKIQQKDKKSKMKRMDKSDNEEEREPENQKKKRKRIKQLESDSSDEEDVLASPTLEEEKAPSPPPLVPALKAELEPASTEASAGGKKRKRKRVLKSKMFVDEEEGCMVTEKVYESESCTDSEDDFAKTKPPAVPKQPALPVKKEPKEERKNQKKGAATASRANKQISIMGFCQKK.

Disordered regions lie at residues 148–229 (VAQA…SAKG), 249–380 (VPGQ…KRVL), and 399–461 (YESE…CQKK). The span at 155–172 (ARSSSQTPSDTSAVSTPP) shows a compositional bias: polar residues. Residues 205–214 (DANKEPKAKE) show a composition bias toward basic and acidic residues. The span at 215 to 228 (APSVSAASSKPSAK) shows a compositional bias: low complexity. Basic and acidic residues predominate over residues 279–304 (KPGRKTEPAKIQQKDKKSKMKRMDKS). Positions 371 to 380 (GKKRKRKRVL) are enriched in basic residues. Residues 427 to 436 (VKKEPKEERK) are compositionally biased toward basic and acidic residues. The PIP-box motif lies at 451–458 (QISIMGFC).

Component of both the DNA polymerase delta and DNA polymerase zeta complexes. The tetrameric DNA polymerase delta complex (Pol-delta4), which consists of POLD1/p125, POLD2/p50, POLD3/p66/p68 and POLD4/p12, with POLD1 bearing DNA polymerase and 3' to 5' proofreading exonuclease activities.

The protein resides in the cytoplasm. It is found in the nucleus. Its function is as follows. Accessory component of both the DNA polymerase delta complex and the DNA polymerase zeta complex. As a component of the trimeric and tetrameric DNA polymerase delta complexes (Pol-delta3 and Pol-delta4, respectively), plays a role in high fidelity genome replication, including in lagging strand synthesis, and repair. Required for optimal Pol-delta activity. Stabilizes the Pol-delta complex and plays a major role in Pol-delta stimulation by PCNA. Pol-delta3 and Pol-delta4 are characterized by the absence or the presence of POLD4. They exhibit differences in catalytic activity. Most notably, Pol-delta3 shows higher proofreading activity than Pol-delta4. Although both Pol-delta3 and Pol-delta4 process Okazaki fragments in vitro, Pol-delta3 may also be better suited to fulfill this task, exhibiting near-absence of strand displacement activity compared to Pol-delta4 and stalling on encounter with the 5'-blocking oligonucleotides. Pol-delta3 idling process may avoid the formation of a gap, while maintaining a nick that can be readily ligated. Along with DNA polymerase kappa, DNA polymerase delta carries out approximately half of nucleotide excision repair (NER) synthesis following UV irradiation. In this context, POLD3, along with PCNA and RFC1-replication factor C complex, is required to recruit POLD1, the catalytic subunit of the polymerase delta complex, to DNA damage sites. Under conditions of DNA replication stress, required for the repair of broken replication forks through break-induced replication (BIR). Involved in the translesion synthesis (TLS) of templates carrying O6-methylguanine or abasic sites performed by Pol-delta4, independently of DNA polymerase zeta (REV3L) or eta (POLH). Facilitates abasic site bypass by DNA polymerase delta by promoting extension from the nucleotide inserted opposite the lesion. Also involved in TLS, as a component of the tetrameric DNA polymerase zeta complex. Along with POLD2, dramatically increases the efficiency and processivity of DNA synthesis of the DNA polymerase zeta complex compared to the minimal zeta complex, consisting of only REV3L and REV7. The sequence is that of DNA polymerase delta subunit 3 (POLD3) from Gallus gallus (Chicken).